A 313-amino-acid chain; its full sequence is 4-hydroxy-3-methylbut-2-enyl diphosphate reductase (313 aa).

Cys-14 is a [4Fe-4S] cluster binding site. (2E)-4-hydroxy-3-methylbut-2-enyl diphosphate contacts are provided by His-43 and His-76. Residues His-43 and His-76 each coordinate dimethylallyl diphosphate. Positions 43 and 76 each coordinate isopentenyl diphosphate. Residue Cys-98 coordinates [4Fe-4S] cluster. A (2E)-4-hydroxy-3-methylbut-2-enyl diphosphate-binding site is contributed by His-126. Dimethylallyl diphosphate is bound at residue His-126. Residue His-126 coordinates isopentenyl diphosphate. The active-site Proton donor is the Glu-128. Residue Thr-166 participates in (2E)-4-hydroxy-3-methylbut-2-enyl diphosphate binding. Cys-196 lines the [4Fe-4S] cluster pocket. The (2E)-4-hydroxy-3-methylbut-2-enyl diphosphate site is built by Ser-224, Ser-225, Asn-226, and Ser-269. Dimethylallyl diphosphate-binding residues include Ser-224, Ser-225, Asn-226, and Ser-269. Isopentenyl diphosphate is bound by residues Ser-224, Ser-225, Asn-226, and Ser-269.

The protein belongs to the IspH family. The cofactor is [4Fe-4S] cluster.

It catalyses the reaction isopentenyl diphosphate + 2 oxidized [2Fe-2S]-[ferredoxin] + H2O = (2E)-4-hydroxy-3-methylbut-2-enyl diphosphate + 2 reduced [2Fe-2S]-[ferredoxin] + 2 H(+). The catalysed reaction is dimethylallyl diphosphate + 2 oxidized [2Fe-2S]-[ferredoxin] + H2O = (2E)-4-hydroxy-3-methylbut-2-enyl diphosphate + 2 reduced [2Fe-2S]-[ferredoxin] + 2 H(+). It functions in the pathway isoprenoid biosynthesis; dimethylallyl diphosphate biosynthesis; dimethylallyl diphosphate from (2E)-4-hydroxy-3-methylbutenyl diphosphate: step 1/1. The protein operates within isoprenoid biosynthesis; isopentenyl diphosphate biosynthesis via DXP pathway; isopentenyl diphosphate from 1-deoxy-D-xylulose 5-phosphate: step 6/6. Its function is as follows. Catalyzes the conversion of 1-hydroxy-2-methyl-2-(E)-butenyl 4-diphosphate (HMBPP) into a mixture of isopentenyl diphosphate (IPP) and dimethylallyl diphosphate (DMAPP). Acts in the terminal step of the DOXP/MEP pathway for isoprenoid precursor biosynthesis. The protein is 4-hydroxy-3-methylbut-2-enyl diphosphate reductase of Tropheryma whipplei (strain TW08/27) (Whipple's bacillus).